Reading from the N-terminus, the 432-residue chain is Glutamyl-tRNA reductase (432 aa).

Residues 49 to 52 (TCNR), Ser109, 114 to 116 (EGQ), and Gln120 contribute to the substrate site. The active-site Nucleophile is the Cys50. 198–203 (GAGRMS) is an NADP(+) binding site.

This sequence belongs to the glutamyl-tRNA reductase family. As to quaternary structure, homodimer.

It catalyses the reaction (S)-4-amino-5-oxopentanoate + tRNA(Glu) + NADP(+) = L-glutamyl-tRNA(Glu) + NADPH + H(+). The protein operates within porphyrin-containing compound metabolism; protoporphyrin-IX biosynthesis; 5-aminolevulinate from L-glutamyl-tRNA(Glu): step 1/2. It participates in porphyrin-containing compound metabolism; chlorophyll biosynthesis. Functionally, catalyzes the NADPH-dependent reduction of glutamyl-tRNA(Glu) to glutamate 1-semialdehyde (GSA). This is Glutamyl-tRNA reductase from Synechococcus sp. (strain CC9902).